A 503-amino-acid polypeptide reads, in one-letter code: NAD(P)H-quinone oxidoreductase chain 4, chloroplastic (503 aa).

13 consecutive transmembrane segments (helical) span residues 4 to 24 (FPWLTIIVVFPISAGSSIFFL), 37 to 57 (ICICLLELLLTTYAFCYHFQL), 87 to 107 (IGPTLLTGFITTLATLAAWPV), 134 to 154 (LLLFFIMWELELIPVYLLLSM), 167 to 187 (FILYTAGGSIFLLMGVPGMGL), 208 to 228 (ALEIIFYFGFFIAYAVKSPII), 242 to 262 (HYSTCMLLAGILLKMGAYGLV), 272 to 292 (AHSIFSPWLMIVGTIQIIYAA), 305 to 325 (IAYSSVSHMGFTIIGIASITD), 330 to 350 (GAILQIISHGFIGAALFFLAG), 386 to 406 (LALPGMSGFFAELVVFFGIIT), 416 to 436 (ILITFVMAIGMILTPIYSLSM), and 462 to 482 (LFVSICIFLPVIGIGIYPDFV).

This sequence belongs to the complex I subunit 4 family.

Its subcellular location is the plastid. It localises to the chloroplast thylakoid membrane. It catalyses the reaction a plastoquinone + NADH + (n+1) H(+)(in) = a plastoquinol + NAD(+) + n H(+)(out). It carries out the reaction a plastoquinone + NADPH + (n+1) H(+)(in) = a plastoquinol + NADP(+) + n H(+)(out). This chain is NAD(P)H-quinone oxidoreductase chain 4, chloroplastic, found in Drimys granadensis.